Consider the following 263-residue polypeptide: Acyl-[acyl-carrier-protein]--UDP-N-acetylglucosamine O-acyltransferase (263 aa).

This sequence belongs to the transferase hexapeptide repeat family. LpxA subfamily. As to quaternary structure, homotrimer.

It is found in the cytoplasm. The catalysed reaction is a (3R)-hydroxyacyl-[ACP] + UDP-N-acetyl-alpha-D-glucosamine = a UDP-3-O-[(3R)-3-hydroxyacyl]-N-acetyl-alpha-D-glucosamine + holo-[ACP]. The protein operates within glycolipid biosynthesis; lipid IV(A) biosynthesis; lipid IV(A) from (3R)-3-hydroxytetradecanoyl-[acyl-carrier-protein] and UDP-N-acetyl-alpha-D-glucosamine: step 1/6. Functionally, involved in the biosynthesis of lipid A, a phosphorylated glycolipid that anchors the lipopolysaccharide to the outer membrane of the cell. The sequence is that of Acyl-[acyl-carrier-protein]--UDP-N-acetylglucosamine O-acyltransferase from Campylobacter jejuni (strain RM1221).